Consider the following 246-residue polypeptide: Glutamate/aspartate import permease protein GltJ (246 aa).

An ABC transmembrane type-1 domain is found at 29 to 230 (FQVTIALSIC…LINAFIMLVM (202 aa)). Helical transmembrane passes span 33–53 (IALS…FGIL), 74–94 (NVPL…LLPE), 104–124 (LDPN…FTAA), 179–196 (LVKN…DMAA), and 212–232 (FTAI…VMTL).

This sequence belongs to the binding-protein-dependent transport system permease family. HisMQ subfamily. In terms of assembly, the complex is composed of two ATP-binding proteins (GltL), two transmembrane proteins (GltJ and GltK) and a solute-binding protein (GltI).

The protein localises to the cell inner membrane. In terms of biological role, part of the ABC transporter complex GltIJKL involved in glutamate and aspartate uptake. Probably responsible for the translocation of the substrate across the membrane. In Escherichia coli O6:H1 (strain CFT073 / ATCC 700928 / UPEC), this protein is Glutamate/aspartate import permease protein GltJ (gltJ).